Consider the following 478-residue polypeptide: Glutamate-1-semialdehyde 2,1-aminomutase, chloroplastic (478 aa).

The transit peptide at 1-40 (MAGAAAASAAAAAVASGISARPVAPRPSPSRARAPRSVVR) directs the protein to the chloroplast. The tract at residues 15 to 36 (ASGISARPVAPRPSPSRARAPR) is disordered. Residue Lys-318 is modified to N6-(pyridoxal phosphate)lysine.

It belongs to the class-III pyridoxal-phosphate-dependent aminotransferase family. HemL subfamily. As to quaternary structure, homodimer. Pyridoxal 5'-phosphate is required as a cofactor.

The protein resides in the plastid. It localises to the chloroplast. It carries out the reaction (S)-4-amino-5-oxopentanoate = 5-aminolevulinate. Its pathway is porphyrin-containing compound metabolism; protoporphyrin-IX biosynthesis; 5-aminolevulinate from L-glutamyl-tRNA(Glu): step 2/2. It participates in porphyrin-containing compound metabolism; chlorophyll biosynthesis. The chain is Glutamate-1-semialdehyde 2,1-aminomutase, chloroplastic (GSA) from Oryza sativa subsp. japonica (Rice).